A 419-amino-acid polypeptide reads, in one-letter code: CinA-like protein (419 aa).

This sequence belongs to the CinA family.

The chain is CinA-like protein from Leptospira borgpetersenii serovar Hardjo-bovis (strain JB197).